Here is a 401-residue protein sequence, read N- to C-terminus: Argininosuccinate synthase (401 aa).

Residues 8 to 16 (AYSGGLDTS) and alanine 35 each bind ATP. Positions 86 and 91 each coordinate L-citrulline. Position 116 (glycine 116) interacts with ATP. L-aspartate-binding residues include threonine 118, asparagine 122, and aspartate 123. Asparagine 122 contacts L-citrulline. Positions 126, 175, 184, 260, and 272 each coordinate L-citrulline.

It belongs to the argininosuccinate synthase family. Type 1 subfamily. Homotetramer.

It is found in the cytoplasm. It catalyses the reaction L-citrulline + L-aspartate + ATP = 2-(N(omega)-L-arginino)succinate + AMP + diphosphate + H(+). It participates in amino-acid biosynthesis; L-arginine biosynthesis; L-arginine from L-ornithine and carbamoyl phosphate: step 2/3. This Carboxydothermus hydrogenoformans (strain ATCC BAA-161 / DSM 6008 / Z-2901) protein is Argininosuccinate synthase.